Here is a 600-residue protein sequence, read N- to C-terminus: Na(+)/dicarboxylate cotransporter 3 (600 aa).

The Cytoplasmic portion of the chain corresponds to 1–16; it reads MAALAALAKKVWSARR. Residues 17-37 traverse the membrane as a helical segment; sequence LLVLLLVPLALLPILFALPPK. At 38 to 55 the chain is on the extracellular side; that stretch reads EGRCLYVILLMAVYWCTE. Residues 56-76 traverse the membrane as a helical segment; it reads ALPLSVTALLPIILFPFMGIL. The Cytoplasmic segment spans residues 77–82; it reads PSSKVC. Residues 83–103 traverse the membrane as a helical segment; that stretch reads PQYFLDTNFLFLSGLIMASAI. Residues 104-137 lie on the Extracellular side of the membrane; the sequence is EERNLHRRIALKVLMLVGVQPARLILGMMVTTSF. Residues 138–158 traverse the membrane as a helical segment; sequence LSMWLSNTASTAMMLPIASAI. Over 159 to 229 the chain is Cytoplasmic; it reads LKSLFGQRDT…KEEEHRRNIW (71 aa). A helical membrane pass occupies residues 230–250; that stretch reads KGFLISIPYSASIGGTATLTG. Residues 251–278 are Extracellular-facing; that stretch reads TAPNLILLGQLKSFFPQCDVVNFGSWFI. Residues 279 to 299 form a helical membrane-spanning segment; sequence FAFPLMLLFLLVGWLWISFLY. The Cytoplasmic segment spans residues 300–336; it reads GGMSWRGWRKKNSKLQDVAEDKAKAVIQEEFQNLGPI. A helical membrane pass occupies residues 337-357; that stretch reads KFAEQAVFILFCLFAILLFSR. At 358 to 372 the chain is on the extracellular side; it reads DPKFIPGWASLFAPG. A helical transmembrane segment spans residues 373-393; the sequence is FVSDAVTGVAIVTILFFFPSQ. Residues 394–422 are Cytoplasmic-facing; it reads KPSLKWWFDFKAPNSETEPLLSWKKAQET. The helical intramembrane region spans 423–443; that stretch reads VPWNIILLLGGGFAMAKGCEE. Topologically, residues 444-461 are cytoplasmic; sequence SGLSAWIGGQLHPLEHVP. Residues 462–482 traverse the membrane as a helical segment; it reads PLLAVLLITVVIAFFTEFASN. The Extracellular portion of the chain corresponds to 483–505; sequence TATIIIFLPVLAELAIRLHVHPL. Residues 506–526 form a helical membrane-spanning segment; sequence YLMIPGTVSCSYAFMLPVSTP. Residues 527–546 are Cytoplasmic-facing; the sequence is PNSIAFSTGHLLVKDMVRTG. The chain crosses the membrane as a helical span at residues 547 to 567; sequence LLMNLMGVLLLSLAMNTWAQA. Topologically, residues 568 to 600 are extracellular; the sequence is IFQLGTFPDWANTHAANVTALPPALTNNTVQTL. N-linked (GlcNAc...) asparagine glycosylation is found at asparagine 584 and asparagine 594.

This sequence belongs to the SLC13A/DASS transporter (TC 2.A.47) family. NADC subfamily. As to expression, highly expressed in proximal parts of straight tubules in the kidney. Detected in placenta, in brain, and in liver. Strongly expressed within the meningeal layers of supporting tissue that surround the brain and relatively weakly expressed throughout the cerebral cortex, hippocampus, and cerebellum.

It is found in the cell membrane. The enzyme catalyses succinate(out) + 3 Na(+)(out) = succinate(in) + 3 Na(+)(in). The catalysed reaction is 2-oxoglutarate(out) + 3 Na(+)(out) = 2-oxoglutarate(in) + 3 Na(+)(in). It carries out the reaction N-acetyl-L-aspartate(out) + 3 Na(+)(out) = N-acetyl-L-aspartate(in) + 3 Na(+)(in). It catalyses the reaction glutarate(out) + 3 Na(+)(out) = glutarate(in) + 3 Na(+)(in). The enzyme catalyses fumarate(out) + 3 Na(+)(out) = fumarate(in) + 3 Na(+)(in). The catalysed reaction is malate(out) + 3 Na(+)(out) = malate(in) + 3 Na(+)(in). It carries out the reaction 2,2-dimethylsuccinate(out) + 3 Na(+)(out) = 2,2-dimethylsuccinate(in) + 3 Na(+)(in). It catalyses the reaction 2,3-dimethylsuccinate(out) + 3 Na(+)(out) = 2,3-dimethylsuccinate(in) + 3 Na(+)(in). The enzyme catalyses itaconate(out) + 3 Na(+)(out) = itaconate(in) + 3 Na(+)(in). Li(+) decreases succinate transport in the presence of Na(+). In terms of biological role, high-affinity sodium-dicarboxylate cotransporter that accepts a range of substrates with 4-6 carbon atoms, such as the citric acid cycle intermediates succinate and alpha-ketoglutarate (2-oxoglutarate), as well as other compounds including N-acetyl-L-aspartate. Transports the dicarboxylate into the cell with a probable stoichiometry of 3 Na(+) for 1 divalent dicarboxylate, rendering the process electrogenic. Can transport citrate in a Na(+)-dependent manner, recognizing the divalent form of citrate rather than the trivalent form which is normally found in blood. Imports itaconate in hepatocytes leading to activation of TFEB-dependent lysosomal biogenesis involved in antibacterial innate immune response. This is Na(+)/dicarboxylate cotransporter 3 (Slc13a3) from Rattus norvegicus (Rat).